The following is a 337-amino-acid chain: WAT1-related protein At1g11460 (337 aa).

A run of 10 helical transmembrane segments spans residues 14-34 (WPPI…NALV), 46-66 (IIGA…AYIL), 83-103 (FISG…GLSY), 107-127 (TVAC…ALIL), 139-159 (AGMI…FLTF), 188-208 (WLLG…WILF), 220-240 (FSST…LSLY), 254-274 (FVIG…TVSV), 284-304 (VFVS…DFII), and 309-329 (LYLG…VFLW). The region spanning 27–157 (MGSVNALVKK…IICISGALFL (131 aa)) is the EamA 1 domain. The EamA 2 domain maps to 220 to 328 (FSSTCLMSIF…GTITGLYVFL (109 aa)).

The protein belongs to the drug/metabolite transporter (DMT) superfamily. Plant drug/metabolite exporter (P-DME) (TC 2.A.7.4) family.

It localises to the membrane. The sequence is that of WAT1-related protein At1g11460 from Arabidopsis thaliana (Mouse-ear cress).